A 902-amino-acid chain; its full sequence is Mitochondrial aspartate-glutamate transporter AGC1 (902 aa).

Solcar repeat units lie at residues 528-614 (FDSL…MRNR), 622-710 (LSLF…LKKD), and 725-813 (LKTW…FKGF). A run of 6 helical transmembrane segments spans residues 534–554 (FSLG…IDFI), 591–611 (GPQL…NDFM), 622–642 (LSLF…VIFT), 681–702 (GLYN…IYFP), 731–751 (LTAG…FDVI), and 786–806 (FKGG…TLAA).

This sequence belongs to the mitochondrial carrier (TC 2.A.29) family.

It localises to the mitochondrion inner membrane. Calcium-dependent mitochondrial aspartate and glutamate carrier. Transport of glutamate in mitochondria is required for mitochondrial transamination reactions and ornithine synthesis. Plays also a role in malate-aspartate NADH shuttle, which is critical for growth on acetate and fatty acids. This is Mitochondrial aspartate-glutamate transporter AGC1 (AGC1) from Saccharomyces cerevisiae (strain ATCC 204508 / S288c) (Baker's yeast).